Reading from the N-terminus, the 340-residue chain is Probable dual-specificity RNA methyltransferase RlmN (340 aa).

Glu-93 serves as the catalytic Proton acceptor. Residues 99–327 (TAKRLTVCVS…VSVRYSRGLE (229 aa)) enclose the Radical SAM core domain. A disulfide bond links Cys-106 and Cys-332. Positions 113, 117, and 120 each coordinate [4Fe-4S] cluster. Residues 160–161 (GE), Ser-190, 213–215 (SLH), and Asn-289 each bind S-adenosyl-L-methionine. Cys-332 serves as the catalytic S-methylcysteine intermediate.

Belongs to the radical SAM superfamily. RlmN family. It depends on [4Fe-4S] cluster as a cofactor.

The protein resides in the cytoplasm. It carries out the reaction adenosine(2503) in 23S rRNA + 2 reduced [2Fe-2S]-[ferredoxin] + 2 S-adenosyl-L-methionine = 2-methyladenosine(2503) in 23S rRNA + 5'-deoxyadenosine + L-methionine + 2 oxidized [2Fe-2S]-[ferredoxin] + S-adenosyl-L-homocysteine. The enzyme catalyses adenosine(37) in tRNA + 2 reduced [2Fe-2S]-[ferredoxin] + 2 S-adenosyl-L-methionine = 2-methyladenosine(37) in tRNA + 5'-deoxyadenosine + L-methionine + 2 oxidized [2Fe-2S]-[ferredoxin] + S-adenosyl-L-homocysteine. Functionally, specifically methylates position 2 of adenine 2503 in 23S rRNA and position 2 of adenine 37 in tRNAs. The chain is Probable dual-specificity RNA methyltransferase RlmN from Rippkaea orientalis (strain PCC 8801 / RF-1) (Cyanothece sp. (strain PCC 8801)).